Reading from the N-terminus, the 416-residue chain is Enterobactin exporter EntS (416 aa).

Topologically, residues 1 to 21 are cytoplasmic; that stretch reads MNKQSWLLNLSLLKTHPAFRA. Residues 22-42 form a helical membrane-spanning segment; the sequence is VFLARFISIVSLGLLGVAVPV. Residues 43–55 are Periplasmic-facing; the sequence is QIQMMTHSTWQVG. A helical transmembrane segment spans residues 56 to 76; it reads LSVTLTGGAMFVGLMVGGVLA. Residues 77 to 83 lie on the Cytoplasmic side of the membrane; that stretch reads DRYERKK. Residues 84 to 104 traverse the membrane as a helical segment; the sequence is VILLARGTCGIGFIGLCLNAL. At 105 to 109 the chain is on the periplasmic side; sequence LPEPS. A helical transmembrane segment spans residues 110 to 130; sequence LLAIYLLGLWDGFFASLGVTA. The Cytoplasmic segment spans residues 131–156; the sequence is LLAATPALVGRENLMQAGAITMLTVR. Residues 157 to 177 form a helical membrane-spanning segment; the sequence is LGSVISPMIGGLLLATGGVAW. Residue Asn-178 is a topological domain, periplasmic. Residues 179-199 traverse the membrane as a helical segment; the sequence is YGLAAAGTFITLLPLLSLPAL. The Cytoplasmic portion of the chain corresponds to 200-218; it reads PPPPQPREHPLKSLLAGFR. The chain crosses the membrane as a helical span at residues 219-239; that stretch reads FLLASPLVGGIALLGGLLTMA. Over 240-256 the chain is Periplasmic; it reads SAVRVLYPALADNWQMS. A helical membrane pass occupies residues 257–277; that stretch reads AAQIGFLYAAIPLGAAIGALT. Residues 278–287 lie on the Cytoplasmic side of the membrane; it reads SGKLAHSVRP. Residues 288-307 form a helical membrane-spanning segment; sequence GLLMLLSTLGAFLAIGLFGL. At 308 to 313 the chain is on the periplasmic side; it reads MPMWIL. A helical membrane pass occupies residues 314–336; it reads GVVCLALFGWLSAVSSLLQYTML. The Cytoplasmic segment spans residues 337-356; it reads QTQTPEAMLGRINGLWTAQN. Residues 357-377 form a helical membrane-spanning segment; that stretch reads VTGDAIGAALLGGLGAMMTPV. Position 378 (Ala-378) is a topological domain, periplasmic. The chain crosses the membrane as a helical span at residues 379–399; that stretch reads SASASGFGLLIIGVLLLLVLV. The Cytoplasmic segment spans residues 400–416; sequence ELRRFRQTPPQVTASGS.

The protein belongs to the major facilitator superfamily. EntS (TC 2.A.1.38) family.

Its subcellular location is the cell inner membrane. In terms of biological role, component of an export pathway for enterobactin. In Escherichia coli O6:K15:H31 (strain 536 / UPEC), this protein is Enterobactin exporter EntS.